Reading from the N-terminus, the 130-residue chain is Small ribosomal subunit protein uS11 (130 aa).

It belongs to the universal ribosomal protein uS11 family. Part of the 30S ribosomal subunit. Interacts with proteins S7 and S18. Binds to IF-3.

Its function is as follows. Located on the platform of the 30S subunit, it bridges several disparate RNA helices of the 16S rRNA. Forms part of the Shine-Dalgarno cleft in the 70S ribosome. This chain is Small ribosomal subunit protein uS11, found in Acidiphilium cryptum (strain JF-5).